Reading from the N-terminus, the 412-residue chain is Isocitrate dehydrogenase [NADP] cytoplasmic (412 aa).

Residues 75–77 (TIT) and Arg-82 each bind NADP(+). Thr-77 contributes to the substrate binding site. Residues 94–100 (SPNGTIR), Arg-109, and Arg-132 each bind substrate. Asp-252 contributes to the Mn(2+) binding site. NADP(+) is bound at residue Lys-260. Asp-275 is a Mn(2+) binding site. NADP(+) is bound by residues 310–315 (GTVTRH) and Asn-328.

Belongs to the isocitrate and isopropylmalate dehydrogenases family. Homodimer. Requires Mg(2+) as cofactor. Mn(2+) serves as cofactor. The N-terminus is blocked.

The protein localises to the cytoplasm. The enzyme catalyses D-threo-isocitrate + NADP(+) = 2-oxoglutarate + CO2 + NADPH. Its activity is regulated as follows. By catabolite repression. In terms of biological role, may function in the production of NADPH for fatty acid and sterol synthesis. The chain is Isocitrate dehydrogenase [NADP] cytoplasmic (IDP2) from Saccharomyces cerevisiae (strain ATCC 204508 / S288c) (Baker's yeast).